Consider the following 350-residue polypeptide: 3-dehydroquinate synthase (350 aa).

NAD(+) is bound by residues 106–110 (GVVGD), 130–131 (TS), K143, and K152. E185, H246, and H263 together coordinate Zn(2+).

It belongs to the sugar phosphate cyclases superfamily. Dehydroquinate synthase family. It depends on NAD(+) as a cofactor. Co(2+) is required as a cofactor. Requires Zn(2+) as cofactor.

It is found in the cytoplasm. The catalysed reaction is 7-phospho-2-dehydro-3-deoxy-D-arabino-heptonate = 3-dehydroquinate + phosphate. It functions in the pathway metabolic intermediate biosynthesis; chorismate biosynthesis; chorismate from D-erythrose 4-phosphate and phosphoenolpyruvate: step 2/7. Functionally, catalyzes the conversion of 3-deoxy-D-arabino-heptulosonate 7-phosphate (DAHP) to dehydroquinate (DHQ). The chain is 3-dehydroquinate synthase from Clostridium perfringens (strain 13 / Type A).